The following is a 406-amino-acid chain: DNA primase large subunit PriL (406 aa).

4 residues coordinate [4Fe-4S] cluster: Cys-302, Cys-375, Cys-384, and Cys-389.

This sequence belongs to the eukaryotic-type primase large subunit family. Heterodimer of a small subunit (PriS) and a large subunit (PriL). It depends on [4Fe-4S] cluster as a cofactor.

Regulatory subunit of DNA primase, an RNA polymerase that catalyzes the synthesis of short RNA molecules used as primers for DNA polymerase during DNA replication. Stabilizes and modulates the activity of the small subunit, increasing the rate of DNA synthesis, and conferring RNA synthesis capability. The DNA polymerase activity may enable DNA primase to also catalyze primer extension after primer synthesis. May also play a role in DNA repair. This chain is DNA primase large subunit PriL, found in Methanopyrus kandleri (strain AV19 / DSM 6324 / JCM 9639 / NBRC 100938).